The sequence spans 169 residues: Protein-export protein SecB (169 aa).

This sequence belongs to the SecB family. As to quaternary structure, homotetramer, a dimer of dimers. One homotetramer interacts with 1 SecA dimer.

The protein localises to the cytoplasm. In terms of biological role, one of the proteins required for the normal export of preproteins out of the cell cytoplasm. It is a molecular chaperone that binds to a subset of precursor proteins, maintaining them in a translocation-competent state. It also specifically binds to its receptor SecA. This chain is Protein-export protein SecB, found in Haemophilus influenzae (strain PittEE).